A 121-amino-acid chain; its full sequence is MADFNSPIQYLKEDSRDRTSIGSLEYDENSDTIIPSFAAGLEDFEPIPSPTTTSTSLYSQLTHNMEKIAEEEDINFLHDTREFTSLVPEETDNKPEDDEESGAKPKKKKHLFPKLSSHKSK.

Disordered stretches follow at residues 1 to 24 (MADFNSPIQYLKEDSRDRTSIGSL) and 84 to 121 (TSLVPEETDNKPEDDEESGAKPKKKKHLFPKLSSHKSK). Residue alanine 2 is modified to N-acetylalanine; by host. Residues 104-121 (KPKKKKHLFPKLSSHKSK) show a composition bias toward basic residues.

This sequence belongs to the asfivirus structural protein p14.5 family. Interacts with the major capsid protein. Interacts with host IRF3; this interaction interferes with the recruitment of IRF3 to TBK1. Acetylated.

Its subcellular location is the virion. Its function is as follows. Structural protein required for transport of intracellular particles from the assembly sites to the plasma membrane. Binds to both ssDNA and dsDNA. Suppressed the activation of the cGAS/STING pathway by interfering with the recruitment of IRF3 to TBK1, which in turn suppresses IRF3 phosphorylation, decreasing interferon production. The chain is Structural protein p14.5 from Ornithodoros (relapsing fever ticks).